Consider the following 644-residue polypeptide: Arginine--tRNA ligase (644 aa).

A 'HIGH' region motif is present at residues 129-139; it reads ANPIHPLHLGH.

It belongs to the class-I aminoacyl-tRNA synthetase family.

The protein resides in the cytoplasm. The enzyme catalyses tRNA(Arg) + L-arginine + ATP = L-arginyl-tRNA(Arg) + AMP + diphosphate. This Aeropyrum pernix (strain ATCC 700893 / DSM 11879 / JCM 9820 / NBRC 100138 / K1) protein is Arginine--tRNA ligase (argS).